The sequence spans 469 residues: DNA (cytosine-5-)-methyltransferase M.ApeKI (469 aa).

Positions 4–469 (YSTISLFSGA…EALAEVLDAV (466 aa)) constitute an SAM-dependent MTase C5-type domain. Residue Cys93 is part of the active site.

This sequence belongs to the class I-like SAM-binding methyltransferase superfamily. C5-methyltransferase family.

The enzyme catalyses a 2'-deoxycytidine in DNA + S-adenosyl-L-methionine = a 5-methyl-2'-deoxycytidine in DNA + S-adenosyl-L-homocysteine + H(+). Cytosine methylase that recognizes the double-stranded sequence 5'-GC(A/T)GC-3', methylates C-5 position of the second cytosine on both strands, and protects the DNA from cleavage by the ApeKI endonuclease. The protein is DNA (cytosine-5-)-methyltransferase M.ApeKI of Aeropyrum pernix (strain ATCC 700893 / DSM 11879 / JCM 9820 / NBRC 100138 / K1).